The sequence spans 660 residues: MSSKVQQEIADLKKLIRKWDKEYYVDSLPSVEDFVYDKHILRLQELESKYPEYKTLDSPTLKFGSDLLNDFKEVEHSAPILSLDKVYDLDLLKSWIDKIDFNNSFNISVEPKIDGCSIVLYYKDGVLEKALTRGNGKFGNDVTINVRTIRYIPLFLDEKVDLVLRGEVYITKENFLKINKFLEKPYTNSRNLASGILRRVDSREVANFPLNIFIYDFLNAGLEFKTNDLATARLKKLGFKVNPLIRFFDLKNSIGEVLNYIADITKKRDSFEYEIDGVVLKVSDFALRERLGYTAHHPKWAMAYKFEALSGFSRVNSIVVQVGRSGKITPVANIDKVFVSGAFITSATLHNQDYIRSIGLNVGDVVKVSRRGDVIPAVEMVINKFSTGFFKVPDNCPACKTAVVKEGAHFFCPNNNCPSVAVERIKYFCSKNCMDIEGFSDKIISFLFEKKFIFSEIDLYTFDFYKLLEFKGFKDRKINNLINSIEASKKKPFSKLLLSMGIKDLGENTIRLLFLNNLNSFSKLFKLCQDRYFAFSTLLKIKGIGEKIALNIIEAFNDSVMLNKFKFFENLEFKMEEVVAIDGENKLLAGKKFCITGTFNGYSRSIIIDKLKNKGAIFNTCVTGSLDFLIVGEKAGSKLKKALSLNIKIMSFEDIKSYLD.

Residues D33–D37, S82–L83, and E110 each bind NAD(+). The active-site N6-AMP-lysine intermediate is the K112. Residues R133, E167, K281, and K305 each contribute to the NAD(+) site. The Zn(2+) site is built by C396, C399, C412, and C417. One can recognise a BRCT domain in the interval G583–D660.

This sequence belongs to the NAD-dependent DNA ligase family. LigA subfamily. Mg(2+) is required as a cofactor. It depends on Mn(2+) as a cofactor.

The catalysed reaction is NAD(+) + (deoxyribonucleotide)n-3'-hydroxyl + 5'-phospho-(deoxyribonucleotide)m = (deoxyribonucleotide)n+m + AMP + beta-nicotinamide D-nucleotide.. In terms of biological role, DNA ligase that catalyzes the formation of phosphodiester linkages between 5'-phosphoryl and 3'-hydroxyl groups in double-stranded DNA using NAD as a coenzyme and as the energy source for the reaction. It is essential for DNA replication and repair of damaged DNA. The polypeptide is DNA ligase (Borreliella burgdorferi (strain ATCC 35210 / DSM 4680 / CIP 102532 / B31) (Borrelia burgdorferi)).